A 524-amino-acid chain; its full sequence is Putative ribose/galactose/methyl galactoside import ATP-binding protein 1 (524 aa).

2 consecutive ABC transporter domains span residues 29–270 (LEMR…VGRT) and 280–524 (VPIG…TGGH). An ATP-binding site is contributed by 61 to 68 (GENGAGKS).

It belongs to the ABC transporter superfamily. Carbohydrate importer 2 (CUT2) (TC 3.A.1.2) family.

The protein localises to the cell inner membrane. The enzyme catalyses D-ribose(out) + ATP + H2O = D-ribose(in) + ADP + phosphate + H(+). The catalysed reaction is D-galactose(out) + ATP + H2O = D-galactose(in) + ADP + phosphate + H(+). Functionally, part of an ABC transporter complex involved in carbohydrate import. Could be involved in ribose, galactose and/or methyl galactoside import. Responsible for energy coupling to the transport system. The sequence is that of Putative ribose/galactose/methyl galactoside import ATP-binding protein 1 from Rhizobium etli (strain ATCC 51251 / DSM 11541 / JCM 21823 / NBRC 15573 / CFN 42).